A 345-amino-acid polypeptide reads, in one-letter code: Glycosyltransferase 1 domain-containing protein 1 (345 aa).

Residues 1–19 (MKILFLACLRAHTGNSTTA) form the signal peptide. 2 N-linked (GlcNAc...) asparagine glycosylation sites follow: asparagine 246 and asparagine 322.

This sequence belongs to the glycosyltransferase group 1 family. Glycosyltransferase 4 subfamily.

The protein localises to the secreted. This is Glycosyltransferase 1 domain-containing protein 1 (glt1d1) from Xenopus tropicalis (Western clawed frog).